A 476-amino-acid chain; its full sequence is Eukaryotic translation initiation factor 3 subunit L (476 aa).

Residues 257 to 452 form the PCI domain; it reads DAIRMFSHIL…DLDYALEKDL (196 aa).

This sequence belongs to the eIF-3 subunit L family. Component of the eukaryotic translation initiation factor 3 (eIF-3) complex.

The protein resides in the cytoplasm. In terms of biological role, component of the eukaryotic translation initiation factor 3 (eIF-3) complex, which is involved in protein synthesis of a specialized repertoire of mRNAs and, together with other initiation factors, stimulates binding of mRNA and methionyl-tRNAi to the 40S ribosome. The eIF-3 complex specifically targets and initiates translation of a subset of mRNAs involved in cell proliferation. This chain is Eukaryotic translation initiation factor 3 subunit L, found in Emericella nidulans (strain FGSC A4 / ATCC 38163 / CBS 112.46 / NRRL 194 / M139) (Aspergillus nidulans).